Reading from the N-terminus, the 95-residue chain is MLKMNLQFFAHKKGVGSTKNGRDSESKRLGAKRADGQFVLAGNILYRQRGTKIHPGVNVGRGGDDTLFALVDGVLKFERKGRDKKQASVYPVEAK.

The propeptide occupies 1–9 (MLKMNLQFF).

It belongs to the bacterial ribosomal protein bL27 family. Post-translationally, the N-terminus is cleaved by ribosomal processing cysteine protease Prp.

This Lachnoclostridium phytofermentans (strain ATCC 700394 / DSM 18823 / ISDg) (Clostridium phytofermentans) protein is Large ribosomal subunit protein bL27.